Here is a 462-residue protein sequence, read N- to C-terminus: Ubiquitin carboxyl-terminal hydrolase calypso (462 aa).

In terms of domain architecture, UCH catalytic spans 29-260; sequence GWLELESDPG…IRFNLMAVVP (232 aa). C115 acts as the Nucleophile in catalysis. The Proton donor role is filled by H197. The 29-residue stretch at 357-385 folds into the ULD domain; that stretch reads NYDKFICTFLSMLAHQGVLGELVSQHLLP. The positively charged C-terminal tail required for binding nucleosomes stretch occupies residues 387-462; that stretch reads KKIANRLNRQ…KGRNKCRKRK (76 aa). The span at 413-447 shows a compositional bias: low complexity; that stretch reads GTNAAGSKSQQQQQQTQQQPQQTQTAKNGKSPGKT. The disordered stretch occupies residues 413 to 462; it reads GTNAAGSKSQQQQQQTQQQPQQTQTAKNGKSPGKTPGRRRKGRNKCRKRK. Positions 448–462 are enriched in basic residues; that stretch reads PGRRRKGRNKCRKRK.

The protein belongs to the peptidase C12 family. BAP1 subfamily. Catalytic component of the polycomb repressive deubiquitinase (PR-DUB) complex, at least composed of caly/calypso, Asx and sba (MBD5/6 homolog). The PR-DUB complex associates with nucleosomes to mediate deubiquitination of histone H2AK118ub1 substrates; the association requires the positively charged C-terminal tail of caly, probably due to direct binding of DNA. Interacts (via ULD domain) with Asx (via DEUBAD domain); the interaction produces a stable heterodimer with a composite binding site for ubiquitin. Homodimerizes (via coiled-coil hinge-region between the UCH and ULD domains) to mediate assembly of 2 copies of the caly-Asx heterodimer into a bisymmetric tetramer; dimerization enhances PR-DUB association with nucleosomes.

It localises to the nucleus. The catalysed reaction is Thiol-dependent hydrolysis of ester, thioester, amide, peptide and isopeptide bonds formed by the C-terminal Gly of ubiquitin (a 76-residue protein attached to proteins as an intracellular targeting signal).. Catalytic component of the polycomb repressive deubiquitinase (PR-DUB) complex, a complex that specifically mediates deubiquitination of histone H2A monoubiquitinated at 'Lys-119' (H2AK118ub1). Mediates bisymmetric organization of the PR-DUB complex and is involved in association with nucleosomes to mediate deubiquitination. Does not deubiquitinate monoubiquitinated histone H2B. Required to maintain the transcriptionally repressive state of homeotic genes throughout development. The PR-DUB complex has weak or no activity toward 'Lys-48'- and 'Lys-63'-linked polyubiquitin chains. Polycomb group (PcG) protein. The sequence is that of Ubiquitin carboxyl-terminal hydrolase calypso from Drosophila grimshawi (Hawaiian fruit fly).